A 339-amino-acid chain; its full sequence is Phenylalanine--tRNA ligase alpha subunit (339 aa).

A Mg(2+)-binding site is contributed by E250.

Belongs to the class-II aminoacyl-tRNA synthetase family. Phe-tRNA synthetase alpha subunit type 1 subfamily. Tetramer of two alpha and two beta subunits. It depends on Mg(2+) as a cofactor.

Its subcellular location is the cytoplasm. The enzyme catalyses tRNA(Phe) + L-phenylalanine + ATP = L-phenylalanyl-tRNA(Phe) + AMP + diphosphate + H(+). The sequence is that of Phenylalanine--tRNA ligase alpha subunit from Azobacteroides pseudotrichonymphae genomovar. CFP2.